The primary structure comprises 420 residues: Xyloglucan O-acetyltransferase 4 (420 aa).

The Cytoplasmic segment spans residues 1–30; it reads MTMHEKMKLPSCSCSAFKCGKKDRWLNMER. A helical; Signal-anchor for type II membrane protein transmembrane segment spans residues 31–51; it reads PIPFLLIGLTTILSVFILYTL. The Lumenal portion of the chain corresponds to 52 to 420; it reads NPLKFVIEHN…LLLAVLRRLD (369 aa). Disulfide bonds link C78–C128, C99–C164, C108–C400, and C323–C396. N96 carries an N-linked (GlcNAc...) asparagine glycan. A GDS motif motif is present at residues 151–153; the sequence is GDS. S153 acts as the Nucleophile in catalysis. 4 N-linked (GlcNAc...) asparagine glycosylation sites follow: N192, N212, N270, and N324. The Proton donor role is filled by D395. Residues 395–398 carry the DXXH motif motif; sequence DCVH. Residue H398 is the Proton acceptor of the active site.

This sequence belongs to the PC-esterase family. TBL subfamily.

It is found in the golgi apparatus membrane. In terms of biological role, xyloglucan acetyltransferase that catalyzes the acetylation of fucosylated Gal residues on xyloglucan side chains. Predominantly catalyze 6-O-monoacetylation of Gal residues in the Fuc-Gal-Xyl trisaccharide side chains of xyloglucan oligomers. This is Xyloglucan O-acetyltransferase 4 from Populus trichocarpa (Western balsam poplar).